The primary structure comprises 147 residues: Vasopressin-neurophysin 2-copeptin (147 aa).

Cys1 and Cys6 are disulfide-bonded. Glycine amide is present on Gly9. 7 disulfide bridges follow: Cys22/Cys66, Cys25/Cys39, Cys33/Cys56, Cys40/Cys46, Cys73/Cys85, Cys79/Cys97, and Cys86/Cys91. N-linked (GlcNAc...) asparagine glycosylation is present at Asn114.

Belongs to the vasopressin/oxytocin family. As to quaternary structure, interacts with vasopressin receptors V1bR/AVPR1B (Ki=85 pM), V1aR/AVPR1A (Ki=0.6 nM) and V2R/AVPR2 (Ki=4.9 nM). Interacts with oxytocin receptor (OXTR) (Ki=110 nM).

Its subcellular location is the secreted. Its function is as follows. Neurophysin 2 specifically binds vasopressin. Functionally, vasopressin has a direct antidiuretic action on the kidney, it also causes vasoconstriction of the peripheral vessels. Acts by binding to vasopressin receptors (V1bR/AVPR1B, V1aR/AVPR1A, and V2R/AVPR2). The protein is Vasopressin-neurophysin 2-copeptin (AVP) of Ovis aries (Sheep).